Reading from the N-terminus, the 875-residue chain is Valine--tRNA ligase (875 aa).

Positions 43–53 (PNVTGVLHMGH) match the 'HIGH' region motif. The short motif at 534 to 538 (KMSKS) is the 'KMSKS' region element. K537 contributes to the ATP binding site. Residues 805–875 (GNLINTEEEL…LKESIAALKK (71 aa)) adopt a coiled-coil conformation.

The protein belongs to the class-I aminoacyl-tRNA synthetase family. ValS type 1 subfamily. Monomer.

The protein resides in the cytoplasm. It carries out the reaction tRNA(Val) + L-valine + ATP = L-valyl-tRNA(Val) + AMP + diphosphate. In terms of biological role, catalyzes the attachment of valine to tRNA(Val). As ValRS can inadvertently accommodate and process structurally similar amino acids such as threonine, to avoid such errors, it has a 'posttransfer' editing activity that hydrolyzes mischarged Thr-tRNA(Val) in a tRNA-dependent manner. This is Valine--tRNA ligase from Phocaeicola vulgatus (strain ATCC 8482 / DSM 1447 / JCM 5826 / CCUG 4940 / NBRC 14291 / NCTC 11154) (Bacteroides vulgatus).